Consider the following 26-residue polypeptide: PRKCH upstream open reading frame 2 (26 aa).

Interacts with protein kinase C eta as well as other protein kinases including PRKCD, PRKCQ and PRKCE but not with PRKCG or PRKCZ; the interactions lead to inhibition of kinase activity.

Product of an upstream open reading frame (ORF) of PRKCH which regulates translation of the downstream protein kinase C eta (PKC-eta) ORF. Functions as a repressive element that maintains low basal levels of PKC-eta in growing cells but enhances its expression during stress conditions induced by amino acid starvation in a EIF2AK4/GCN2-dependent manner. In addition to its role in regulating PKC-eta translation, also inhibits the kinase activity of PKC-eta as well as other protein kinases including PRKCD, PRKCQ and PRKCE but not PRKCA, PRKCG or PRKCZ. The polypeptide is PRKCH upstream open reading frame 2 (Homo sapiens (Human)).